Here is a 204-residue protein sequence, read N- to C-terminus: Large ribosomal subunit protein bL17 (204 aa).

The segment at 124-204 (QAVGEAERAR…DDDGPAESKS (81 aa)) is disordered. Residues 128 to 142 (EAERARGTRFSERRK) are compositionally biased toward basic and acidic residues. A compositionally biased stretch (low complexity) spans 156–191 (SESPTAAAVAAQSAEEQAPVEETLTAQAAETSAATV). The segment covering 192–204 (EETDDDGPAESKS) has biased composition (acidic residues).

This sequence belongs to the bacterial ribosomal protein bL17 family. As to quaternary structure, part of the 50S ribosomal subunit. Contacts protein L32.

This chain is Large ribosomal subunit protein bL17, found in Frankia alni (strain DSM 45986 / CECT 9034 / ACN14a).